Consider the following 159-residue polypeptide: V-type proton ATPase 16 kDa proteolipid subunit c (159 aa).

The Lumenal portion of the chain corresponds to 1–12 (MSSEVSSDNPIY). A helical transmembrane segment spans residues 13-35 (GPFFGVMGAASAIIFSALGAAYG). Residues 36 to 57 (TAKSGTGIAAMSVMRPELIMKS) lie on the Cytoplasmic side of the membrane. The chain crosses the membrane as a helical span at residues 58–78 (IIPVVMAGIIAIYGLVVAVLI). Over 79-96 (AGALEEPSKYSLYRGFIH) the chain is Lumenal. The helical transmembrane segment at 97–118 (LGAGLAVGFSGLAAGFAIGIVG) threads the bilayer. The Cytoplasmic segment spans residues 119-130 (DAGVRGTAQQPR). Residues 131–156 (LFVGMILILIFAEVLGLYGLIVAIYL) form a helical membrane-spanning segment. The Lumenal portion of the chain corresponds to 157 to 159 (YTK).

Belongs to the V-ATPase proteolipid subunit family. As to quaternary structure, V-ATPase is a heteromultimeric enzyme made up of two complexes: the ATP-hydrolytic V1 complex and the proton translocation V0 complex. The V1 complex consists of three catalytic AB heterodimers that form a heterohexamer, three peripheral stalks each consisting of EG heterodimers, one central rotor including subunits D and F, and the regulatory subunits C and H. The proton translocation complex V0 consists of the proton transport subunit a, a ring of proteolipid subunits c9c'', rotary subunit d, subunits e and f, and the accessory subunits VhaAC45 and ATP6AP2. In terms of tissue distribution, expressed in the larval middle mid-gut; predominantly in the copper cell region with lower levels of expression in the interstitial cells.

The protein localises to the membrane. Functionally, proton-conducting pore forming subunit of the V0 complex of vacuolar(H+)-ATPase (V-ATPase), a multisubunit enzyme composed of a peripheral complex (V1) that hydrolyzes ATP and a membrane integral complex (V0) that translocates protons. V-ATPase is responsible for acidifying and maintaining the pH of intracellular compartments and in some cell types, is targeted to the plasma membrane, where it is responsible for acidifying the extracellular environment. In enterocytes, acts as part of a pHCl-2 sensory pathway which mediates Tor-dependent larval growth and metabolism in response to zinc availability. Likely acts in maintaining enterocyte lysosomal acidification which consequently promotes Tor activation at the lysosome membrane. The protein is V-type proton ATPase 16 kDa proteolipid subunit c (Vha16-1) of Drosophila melanogaster (Fruit fly).